Consider the following 287-residue polypeptide: MIADKLFEKVEKNGVVCVGLDTSLDYIPEEFKSKFSNESDMLFAFNKEIIDATLDVSACFKVQIAYYEALGLKGLEAYKNTLSYLREKNALIIADIKRGDIAATAKMYAKAHFEGDFESDFITLNPYMGMDSIDPYLPYIEKNEKGVFVLVRTSNKGAQDIEYLEAGDGKKVYDVVGEKLNTLGKNYLGKHGYSSIGGVVGCTHQEEAKEMRDKLDTMPFLIPGYGAQGGTAKDVASYLKNGNGGIVNSSRKILLAYKAMEDNKNFAECARKEAISMRDSIREAILK.

Residue Lys-97 is the Proton donor of the active site.

Belongs to the OMP decarboxylase family. Type 2 subfamily.

The catalysed reaction is orotidine 5'-phosphate + H(+) = UMP + CO2. Its pathway is pyrimidine metabolism; UMP biosynthesis via de novo pathway; UMP from orotate: step 2/2. The chain is Orotidine 5'-phosphate decarboxylase from Clostridium perfringens (strain SM101 / Type A).